The sequence spans 321 residues: Peroxidase 28 (321 aa).

Positions 1-21 are cleaved as a signal peptide; sequence MKIATFSVLLLLLFIFPVALA. Disulfide bonds link cysteine 32–cysteine 111, cysteine 65–cysteine 70, cysteine 117–cysteine 317, and cysteine 196–cysteine 228. Residue histidine 63 is the Proton acceptor of the active site. 5 residues coordinate Ca(2+): aspartate 64, valine 67, glycine 69, aspartate 71, and serine 73. Position 159 (proline 159) interacts with substrate. Histidine 189 is a heme b binding site. Threonine 190 is a Ca(2+) binding site. The Ca(2+) site is built by aspartate 238, threonine 244, and aspartate 249.

This sequence belongs to the peroxidase family. Classical plant (class III) peroxidase subfamily. Heme b serves as cofactor. Ca(2+) is required as a cofactor.

The protein resides in the secreted. It carries out the reaction 2 a phenolic donor + H2O2 = 2 a phenolic radical donor + 2 H2O. Its function is as follows. Removal of H(2)O(2), oxidation of toxic reductants, biosynthesis and degradation of lignin, suberization, auxin catabolism, response to environmental stresses such as wounding, pathogen attack and oxidative stress. These functions might be dependent on each isozyme/isoform in each plant tissue. This Arabidopsis thaliana (Mouse-ear cress) protein is Peroxidase 28 (PER28).